Reading from the N-terminus, the 345-residue chain is Transmembrane protein 144 homolog (345 aa).

The next 10 membrane-spanning stretches (helical) occupy residues 3-23 (IAVG…MFVP), 32-52 (GIFV…VVYS), 61-81 (PLAM…VPIM), 84-104 (IGIG…GWAA), 120-140 (PFLN…FSQI), 193-213 (LAII…VPVI), 233-253 (VFSH…GYVI), 265-285 (LVGP…SWFV), 293-313 (AVSF…WSVF), and 324-344 (LRLL…VGVS).

It belongs to the TMEM144 family.

The protein localises to the membrane. The polypeptide is Transmembrane protein 144 homolog (Caenorhabditis elegans).